The sequence spans 734 residues: Oligopeptide transporter 2 (734 aa).

Helical transmembrane passes span 44–64, 68–88, 125–145, 152–172, 211–231, 252–272, 283–303, 359–379, 414–434, 442–462, 525–545, 596–616, 644–664, and 677–697; these read MWFL…FFGY, PLMI…KLMA, GAGF…IMAF, FLAS…WAGI, FFVI…YLFL, LGSG…SVIA, FFAI…VIPI, FFAI…THVA, WWFY…CIFM, WWGL…VSII, MFLV…SVAW, YPAL…VWLL, ATSV…YFVF, and VLSA…YFSL.

It belongs to the oligopeptide OPT transporter (TC 2.A.67.1) family. Expressed in flowers, leaves, roots, and stems.

Its subcellular location is the membrane. Its function is as follows. Involved in the translocation of tetra- and pentapeptides across the cellular membrane in an energy-dependent manner. The chain is Oligopeptide transporter 2 (OPT2) from Arabidopsis thaliana (Mouse-ear cress).